Consider the following 509-residue polypeptide: MGTRSVALVLLAAVLLQALLPASAAEGLVRIALKKRPIDENSRVAARLSGEEGARRLGLRGANSLGGGGGEGDIVALKNYMNAQYFGEIGVGTPPQKFTVIFDTGSSNLWVPSAKCYFSIACFFHSRYKSGQSSTYQKNGKPAAIQYGTGSIAGFFSEDSVTVGDLVVKDQEFIEATKEPGLTFMVAKFDGILGLGFQEISVGDAVPVWYKMVEQGLVSEPVFSFWFNRHSDEGEGGEIVFGGMDPSHYKGNHTYVPVSQKGYWQFEMGDVLIGGKTTGFCASGCSAIADSGTSLLAGPTAIITEINEKIGATGVVSQECKTVVSQYGQQILDLLLAETQPSKICSQVGLCTFDGKHGVSAGIKSVVDDEAGESNGLQSGPMCNACEMAVVWMQNQLAQNKTQDLILNYINQLCDKLPSPMGESSVDCGSLASMPEISFTIGGKKFALKPEEYILKVGEGAAAQCISGFTAMDIPPPRGPLWILGDVFMGAYHTVFDYGKMRVGFAKSA.

A signal peptide spans 1–24 (MGTRSVALVLLAAVLLQALLPASA). The propeptide at 25 to 67 (AEGLVRIALKKRPIDENSRVAARLSGEEGARRLGLRGANSLGG) is activation peptide. Residues 85–506 (YFGEIGVGTP…DYGKMRVGFA (422 aa)) form the Peptidase A1 domain. Aspartate 103 is an active-site residue. Cysteines 116 and 122 form a disulfide. Residue asparagine 252 is glycosylated (N-linked (GlcNAc...) asparagine). A disulfide bridge links cysteine 281 with cysteine 285. Aspartate 290 is an active-site residue. The region spanning 315 to 420 (VVSQECKTVV…NQLCDKLPSP (106 aa)) is the Saposin B-type domain. 4 disulfides stabilise this stretch: cysteine 320–cysteine 414, cysteine 345–cysteine 386, cysteine 351–cysteine 383, and cysteine 428–cysteine 465. A glycan (N-linked (GlcNAc...) asparagine) is linked at asparagine 400.

Belongs to the peptidase A1 family.

The protein localises to the vacuole. In terms of biological role, involved in the breakdown of propeptides of storage proteins in protein-storage vacuoles. This is Aspartic proteinase oryzasin-1 from Oryza sativa subsp. japonica (Rice).